Reading from the N-terminus, the 351-residue chain is Outer membrane porin protein 32 (351 aa).

Residues 1 to 19 (MKKSLIALAVLAASGAAMA) form the signal peptide. Gln20 is subject to Pyrrolidone carboxylic acid.

This sequence to bacterial outer membrane proteins and porins. In terms of assembly, homotrimer.

Its subcellular location is the cell outer membrane. In terms of biological role, forms anion selective channels. The chain is Outer membrane porin protein 32 (omp32) from Delftia acidovorans (Pseudomonas acidovorans).